Here is a 457-residue protein sequence, read N- to C-terminus: Carboxypeptidase N catalytic chain (457 aa).

An N-terminal signal peptide occupies residues M1–F23. A Peptidase M14 domain is found at R24–V338. C42 and C104 are disulfide-bonded. Zn(2+)-binding residues include H86, E89, and H216. The cysteines at positions 271 and 311 are disulfide-linked. E308 serves as the catalytic Proton donor/acceptor. O-linked (GalNAc...) threonine glycosylation is found at T400, T402, and T409. Residues S418–A457 are disordered.

This sequence belongs to the peptidase M14 family. Tetramer of two catalytic chains and two glycosylated inactive chains. It depends on Zn(2+) as a cofactor. In terms of tissue distribution, plasma. Expressed in liver.

The protein resides in the secreted. It localises to the extracellular space. It carries out the reaction Release of a C-terminal basic amino acid, preferentially lysine.. Protects the body from potent vasoactive and inflammatory peptides containing C-terminal Arg or Lys (such as kinins or anaphylatoxins) which are released into the circulation. The chain is Carboxypeptidase N catalytic chain (Cpn1) from Rattus norvegicus (Rat).